The following is a 403-amino-acid chain: Argininosuccinate synthase (403 aa).

9–17 contributes to the ATP binding site; sequence AYSGGLDTS. Y86 is a binding site for L-citrulline. G116 contacts ATP. T118, N122, and D123 together coordinate L-aspartate. Residue N122 coordinates L-citrulline. L-citrulline is bound by residues R126, S174, E259, and Y271.

This sequence belongs to the argininosuccinate synthase family. Type 1 subfamily. Homotetramer.

Its subcellular location is the cytoplasm. The catalysed reaction is L-citrulline + L-aspartate + ATP = 2-(N(omega)-L-arginino)succinate + AMP + diphosphate + H(+). It functions in the pathway amino-acid biosynthesis; L-arginine biosynthesis; L-arginine from L-ornithine and carbamoyl phosphate: step 2/3. The polypeptide is Argininosuccinate synthase (Ligilactobacillus salivarius (strain UCC118) (Lactobacillus salivarius)).